A 101-amino-acid polypeptide reads, in one-letter code: Small ribosomal subunit protein uS14 (101 aa).

The protein belongs to the universal ribosomal protein uS14 family. As to quaternary structure, part of the 30S ribosomal subunit. Contacts proteins S3 and S10.

Functionally, binds 16S rRNA, required for the assembly of 30S particles and may also be responsible for determining the conformation of the 16S rRNA at the A site. In Alcanivorax borkumensis (strain ATCC 700651 / DSM 11573 / NCIMB 13689 / SK2), this protein is Small ribosomal subunit protein uS14.